The following is a 121-amino-acid chain: uncharacterized protein (121 aa).

The helical transmembrane segment at 6 to 26 threads the bilayer; it reads ITTASILLVVIVAFCAAAPMI.

The protein resides in the membrane. This is an uncharacterized protein from Caenorhabditis elegans.